The primary structure comprises 1177 residues: Dynein axonemal assembly factor 9 (1177 aa).

Residues 1–27 (MDVYPPRRQGLPRARSPGGSSRGSPSV) are disordered. A compositionally biased stretch (low complexity) spans 11–27 (LPRARSPGGSSRGSPSV).

Interacts with ARL3.

Its function is as follows. May act as an effector for ARL3. The protein is Dynein axonemal assembly factor 9 of Homo sapiens (Human).